We begin with the raw amino-acid sequence, 691 residues long: MSVPAQPAPGADGGDPRQPIRVPAGTTAAAAIGEAGLPRRGAPDAIVVVRDAEGKLRDLSWVPDADAEVTPIAANTDDGRSVIRHSTAHVLAQAVQDLFPQAKLGIGPPITDGFYYDFEVLEPFTPDDLQALEKRMRQIVKEGQLFDRRVFESKDQAREELANEPYKVELVDDKSGDPDVMEVGGDELTAYDNLNPRTRERVWGDLCRGPHISTTKHIPAFKLTRSSAAYWRGDQKNASLQRIYGTAWESQEALDTHIELIEEAQRRDHRKLGVELDLFSFPDEIGSGLAVFHPKGGIVRRELEDYSRRKHTEAGYQFVNSPHITKAQLFHTSGHLDWYADGMFPPMQIDAEYNTDGTVRKPGQDYYLKPMNCPMHCLIFRARGRSYRELPLRLFEFGTVYRYEKSGVVHGLTRVRGLTMDDAHIFCTREQMRDELRSLLRFVLDLLSDYGLTDFYLELSTKDPDKFVGSDEVWEEATNVLAEVGAESSLELVPDPGGAAFYGPKISVQVKDALGRTWQMSTIQLDFNFPERFGLEYTAADGTRQRPVMIHRALFGSIERFFGILTEHYAGAFPAWLAPVQAVGIPVADEHIAYLGQVAAQLKSHGVRVEVDTSDDRMAKKIVHHTNQKVPFMLLAGDRDVQADAVSFRFGDRTQINGVPREAAVAAIVDWISRRENATPTGELVKVDSGE.

Residues Met-1–Val-22 form a disordered region. Residues Met-1–Ala-73 form the TGS domain. The tract at residues Asp-268–Pro-574 is catalytic. Zn(2+) contacts are provided by Cys-373, His-424, and His-551.

It belongs to the class-II aminoacyl-tRNA synthetase family. As to quaternary structure, homodimer. Zn(2+) is required as a cofactor.

It localises to the cytoplasm. It carries out the reaction tRNA(Thr) + L-threonine + ATP = L-threonyl-tRNA(Thr) + AMP + diphosphate + H(+). Its function is as follows. Catalyzes the attachment of threonine to tRNA(Thr) in a two-step reaction: L-threonine is first activated by ATP to form Thr-AMP and then transferred to the acceptor end of tRNA(Thr). Also edits incorrectly charged L-seryl-tRNA(Thr). This is Threonine--tRNA ligase from Mycobacterium ulcerans (strain Agy99).